The primary structure comprises 458 residues: tRNA modification GTPase MnmE (458 aa).

Residues R22, E84, and R123 each coordinate (6S)-5-formyl-5,6,7,8-tetrahydrofolate. Positions 220–379 constitute a TrmE-type G domain; the sequence is GISTAIIGRP…LEKAIADLFF (160 aa). N230 serves as a coordination point for K(+). GTP-binding positions include 230-235, 249-255, and 274-277; these read NVGKSS, TDIAGTT, and DTAG. S234 provides a ligand contact to Mg(2+). K(+) contacts are provided by T249, I251, and T254. A Mg(2+)-binding site is contributed by T255. (6S)-5-formyl-5,6,7,8-tetrahydrofolate is bound at residue K458.

The protein belongs to the TRAFAC class TrmE-Era-EngA-EngB-Septin-like GTPase superfamily. TrmE GTPase family. In terms of assembly, homodimer. Heterotetramer of two MnmE and two MnmG subunits. K(+) is required as a cofactor.

The protein resides in the cytoplasm. In terms of biological role, exhibits a very high intrinsic GTPase hydrolysis rate. Involved in the addition of a carboxymethylaminomethyl (cmnm) group at the wobble position (U34) of certain tRNAs, forming tRNA-cmnm(5)s(2)U34. In Bacillus mycoides (strain KBAB4) (Bacillus weihenstephanensis), this protein is tRNA modification GTPase MnmE.